The sequence spans 179 residues: FAD-dependent monooxygenase nscC (179 aa).

A signal peptide spans 1–21 (MGKQQETILIIGAGISGLATS). 2 residues coordinate FAD: Glu-35 and Ala-46. N-linked (GlcNAc...) asparagine glycosylation occurs at Asn-92. An FAD-binding site is contributed by Arg-119. An N-linked (GlcNAc...) asparagine glycan is attached at Asn-170.

Belongs to the paxM FAD-dependent monooxygenase family. Requires FAD as cofactor.

The protein operates within secondary metabolite biosynthesis. Its function is as follows. FAD-dependent monooxygenase; part of the gene cluster that mediates the biosynthesis of neosartoricin B, a prenylated anthracenone that probably exhibits T-cell antiproliferative activity, suggestive of a physiological role as an immunosuppressive agent. The non-reducing polyketide synthase nscA probably synthesizes and cyclizes the decaketide backbone. The hydrolase nscB then mediates the product release through hydrolysis followed by spontaneous decarboxylation. The prenyltransferase nscD catalyzes the addition of the dimethylallyl group to the aromatic C5. The FAD-dependent monooxygenase nscC is then responsible for the stereospecific hydroxylation at C2. Neosartoricin B can be converted into two additional compounds neosartoricins C and D. Neosartoricin C is a spirocyclic compound that is cyclized through the attack of C3 hydroxyl on C14, followed by dehydration. On the other hand, neosartoricin D is a further cyclized compound in which attack of C2 on C14 in neosartoricin C results in the formation of the acetal-containing dioxabicyclo-octanone ring. Both of these compounds are novel and possibly represent related metabolites of the gene cluster. This chain is FAD-dependent monooxygenase nscC, found in Trichophyton equinum (strain ATCC MYA-4606 / CBS 127.97) (Horse ringworm fungus).